The sequence spans 475 residues: Ribulose bisphosphate carboxylase large chain (475 aa).

A propeptide spanning residues 1–2 is cleaved from the precursor; the sequence is MS. Residue Pro-3 is modified to N-acetylproline. Lys-14 carries the N6,N6,N6-trimethyllysine modification. Residues Asn-123 and Thr-173 each contribute to the substrate site. Residue Lys-175 is the Proton acceptor of the active site. Position 177 (Lys-177) interacts with substrate. Mg(2+)-binding residues include Lys-201, Asp-203, and Glu-204. Lys-201 carries the N6-carboxylysine modification. His-294 (proton acceptor) is an active-site residue. Residues Arg-295, His-327, and Ser-379 each coordinate substrate.

This sequence belongs to the RuBisCO large chain family. Type I subfamily. In terms of assembly, heterohexadecamer of 8 large chains and 8 small chains; disulfide-linked. The disulfide link is formed within the large subunit homodimers. Mg(2+) serves as cofactor. The disulfide bond which can form in the large chain dimeric partners within the hexadecamer appears to be associated with oxidative stress and protein turnover.

The protein resides in the plastid. Its subcellular location is the chloroplast. It carries out the reaction 2 (2R)-3-phosphoglycerate + 2 H(+) = D-ribulose 1,5-bisphosphate + CO2 + H2O. It catalyses the reaction D-ribulose 1,5-bisphosphate + O2 = 2-phosphoglycolate + (2R)-3-phosphoglycerate + 2 H(+). Functionally, ruBisCO catalyzes two reactions: the carboxylation of D-ribulose 1,5-bisphosphate, the primary event in carbon dioxide fixation, as well as the oxidative fragmentation of the pentose substrate in the photorespiration process. Both reactions occur simultaneously and in competition at the same active site. This chain is Ribulose bisphosphate carboxylase large chain, found in Amaranthus tricolor (Joseph's coat).